The sequence spans 292 residues: Elongation factor Ts (292 aa).

The tract at residues 80–83 (TDFV) is involved in Mg(2+) ion dislocation from EF-Tu.

It belongs to the EF-Ts family.

The protein resides in the cytoplasm. Associates with the EF-Tu.GDP complex and induces the exchange of GDP to GTP. It remains bound to the aminoacyl-tRNA.EF-Tu.GTP complex up to the GTP hydrolysis stage on the ribosome. This chain is Elongation factor Ts, found in Ralstonia nicotianae (strain ATCC BAA-1114 / GMI1000) (Ralstonia solanacearum).